The sequence spans 450 residues: Phosphoglucosamine mutase (450 aa).

Ser-104 (phosphoserine intermediate) is an active-site residue. The Mg(2+) site is built by Ser-104, Asp-245, Asp-247, and Asp-249. The residue at position 104 (Ser-104) is a Phosphoserine.

Belongs to the phosphohexose mutase family. Mg(2+) serves as cofactor. Activated by phosphorylation.

The catalysed reaction is alpha-D-glucosamine 1-phosphate = D-glucosamine 6-phosphate. Its function is as follows. Catalyzes the conversion of glucosamine-6-phosphate to glucosamine-1-phosphate. This Phenylobacterium zucineum (strain HLK1) protein is Phosphoglucosamine mutase.